Here is a 327-residue protein sequence, read N- to C-terminus: Putative HTH-type transcriptional regulatory protein Mevan_1514 (327 aa).

The HTH cro/C1-type domain occupies 128–189 (LKETREKLNI…IKGINITDYF (62 aa)). Residues 139 to 158 (VGELAEFSRVSRKTIYKYEQ) constitute a DNA-binding region (H-T-H motif).

The sequence is that of Putative HTH-type transcriptional regulatory protein Mevan_1514 from Methanococcus vannielii (strain ATCC 35089 / DSM 1224 / JCM 13029 / OCM 148 / SB).